Consider the following 240-residue polypeptide: Sialidase 85-1.2 (240 aa).

Over residues 127–142 (DDDDGGDDDDEEDSQE) the composition is skewed to acidic residues. Disordered stretches follow at residues 127–158 (DDDD…GKKP) and 221–240 (HRGG…QRDA). Positions 144-155 (SSPKESSPEKIG) are enriched in basic and acidic residues.

It belongs to the glycosyl hydrolase 33 family.

The catalysed reaction is Hydrolysis of alpha-(2-&gt;3)-, alpha-(2-&gt;6)-, alpha-(2-&gt;8)- glycosidic linkages of terminal sialic acid residues in oligosaccharides, glycoproteins, glycolipids, colominic acid and synthetic substrates.. Developmentally regulated neuraminidase implicated in parasite invasion of cells. May contribute to the pathology during T.cruzi infection by cleaving sialic acid from cells of the immune system. The polypeptide is Sialidase 85-1.2 (SA85-1.2) (Trypanosoma cruzi).